The sequence spans 335 residues: Phosphatidate cytidylyltransferase, mitochondrial (335 aa).

It belongs to the TAM41 family. It depends on Mg(2+) as a cofactor.

It is found in the mitochondrion inner membrane. The enzyme catalyses a 1,2-diacyl-sn-glycero-3-phosphate + CTP + H(+) = a CDP-1,2-diacyl-sn-glycerol + diphosphate. It functions in the pathway phospholipid metabolism; CDP-diacylglycerol biosynthesis; CDP-diacylglycerol from sn-glycerol 3-phosphate: step 3/3. Its function is as follows. Catalyzes the conversion of phosphatidic acid (PA) to CDP-diacylglycerol (CDP-DAG), an essential intermediate in the synthesis of phosphatidylglycerol, cardiolipin and phosphatidylinositol. The chain is Phosphatidate cytidylyltransferase, mitochondrial (TAMM41) from Bos taurus (Bovine).